The primary structure comprises 86 residues: Photosystem I reaction center subunit PsaK 1 (86 aa).

2 helical membrane-spanning segments follow: residues 14 to 34 and 61 to 81; these read LSWS…AIAF and AVLG…LGLA.

This sequence belongs to the PsaG/PsaK family.

It is found in the cellular thylakoid membrane. This chain is Photosystem I reaction center subunit PsaK 1 (psaK1), found in Synechocystis sp. (strain ATCC 27184 / PCC 6803 / Kazusa).